Consider the following 502-residue polypeptide: Mannitol 2-dehydrogenase (502 aa).

37–48 provides a ligand contact to NAD(+); it reads IVHVGVGGFHRA.

This sequence belongs to the mannitol dehydrogenase family. As to quaternary structure, monomer.

The catalysed reaction is D-mannitol + NAD(+) = D-fructose + NADH + H(+). Catalyzes the NAD(H)-dependent interconversion of D-fructose and D-mannitol in the mannitol metabolic pathway. The chain is Mannitol 2-dehydrogenase from Aspergillus terreus (strain NIH 2624 / FGSC A1156).